The primary structure comprises 225 residues: MRTIDKLIAPHLKLAPVLVKRAPTLTLAFDDRRKSRLAATLDSGEEVALLLPRGTVLRDGDVLVADDGGLVRVIAAPEAVLYVRAKDALTLTRAAYHLGNRHTPVEVGADYLKLEFDPVLADMLKRIGATVDQVSMPFQPESGAYGGGHKHGHDETFAEDYALAQQVFGEHHGHEHSHDHEHGHSHAAHEHSHGHDHTHGHDHDHGDHVHDESCGHGHHHHHAHR.

Residues 171-215 (HHGHEHSHDHEHGHSHAAHEHSHGHDHTHGHDHDHGDHVHDESCG) are compositionally biased toward basic and acidic residues. The segment at 171-225 (HHGHEHSHDHEHGHSHAAHEHSHGHDHTHGHDHDHGDHVHDESCGHGHHHHHAHR) is disordered. Basic residues predominate over residues 216–225 (HGHHHHHAHR).

This sequence belongs to the UreE family.

It localises to the cytoplasm. Involved in urease metallocenter assembly. Binds nickel. Probably functions as a nickel donor during metallocenter assembly. The sequence is that of Urease accessory protein UreE from Paraburkholderia xenovorans (strain LB400).